The chain runs to 939 residues: Protein translocase subunit SecA (939 aa).

ATP-binding positions include Q85, 103-107 (GEGKT), and D504. The disordered stretch occupies residues 850 to 939 (PVQDGAERPS…KGGGGRRRKK (90 aa)). The span at 854-864 (GAERPSLEKEG) shows a compositional bias: basic and acidic residues. Residues 924–939 (ERRKAQKGGGGRRRKK) show a composition bias toward basic residues.

This sequence belongs to the SecA family. In terms of assembly, monomer and homodimer. Part of the essential Sec protein translocation apparatus which comprises SecA, SecYEG and auxiliary proteins SecDF. Other proteins may also be involved.

Its subcellular location is the cell membrane. The protein resides in the cytoplasm. It carries out the reaction ATP + H2O + cellular proteinSide 1 = ADP + phosphate + cellular proteinSide 2.. Part of the Sec protein translocase complex. Interacts with the SecYEG preprotein conducting channel. Has a central role in coupling the hydrolysis of ATP to the transfer of proteins into and across the cell membrane, serving as an ATP-driven molecular motor driving the stepwise translocation of polypeptide chains across the membrane. The protein is Protein translocase subunit SecA of Streptomyces griseus subsp. griseus (strain JCM 4626 / CBS 651.72 / NBRC 13350 / KCC S-0626 / ISP 5235).